Here is a 359-residue protein sequence, read N- to C-terminus: Halocin-H4 (359 aa).

The N-terminal stretch at 1-46 (MSKDRDGRRTSRRGTLKKIGGFSLGALSFGAVGRTQAATGSSVTTA) is a signal peptide. Disordered regions lie at residues 40–59 (GSSV…DPKS) and 340–359 (IPDR…SRKQ).

Its subcellular location is the secreted. Functionally, has antibacterial activity against other haloarchaeons. Interacts with the membrane of the target cells where it causes permeability changes that result in an ionic imbalance leading to cell lysis and death. The sequence is that of Halocin-H4 (halH4) from Haloferax mediterranei (strain ATCC 33500 / DSM 1411 / JCM 8866 / NBRC 14739 / NCIMB 2177 / R-4) (Halobacterium mediterranei).